Here is a 94-residue protein sequence, read N- to C-terminus: uncharacterized protein (94 aa).

The chain crosses the membrane as a helical span at residues 13–33 (IVICLTTIISVTIFYILVSFF).

It localises to the membrane. This is an uncharacterized protein from Dictyostelium discoideum (Social amoeba).